A 431-amino-acid polypeptide reads, in one-letter code: Na(+)/H(+) antiporter NhaA 1 (431 aa).

11 helical membrane-spanning segments follow: residues 17 to 37 (LSGILLLFVTLFAIIVANSNF), 56 to 76 (FIISMPLRLWINDGLMALFFL), 98 to 118 (MFPFVASLGGMIVPASIYIAL), 123 to 143 (FIGFGIPMGTDTAFAIAMLIL), 154 to 174 (LFLVALAVIDDLGAIIVVATV), 182 to 202 (EYFLHAAFVYGLIWLLNYFDV), 209 to 229 (LFLGIFLWIFIHETGVHATIA), 301 to 321 (FSAFFIMPIFAFSNAGVLLDF), 329 to 349 (MIVLGVALGLLVGKPLGIFGF), 373 to 393 (VGFIAGIGFTMSIFIANLAFI), and 400 to 420 (AIKIGIFTASFMATVIGMILI).

Belongs to the NhaA Na(+)/H(+) (TC 2.A.33) antiporter family.

The protein localises to the cell inner membrane. The catalysed reaction is Na(+)(in) + 2 H(+)(out) = Na(+)(out) + 2 H(+)(in). Functionally, na(+)/H(+) antiporter that extrudes sodium in exchange for external protons. In Aliarcobacter butzleri (strain RM4018) (Arcobacter butzleri), this protein is Na(+)/H(+) antiporter NhaA 1.